The following is a 554-amino-acid chain: MSEAEARPTNFIRQIIDEDLASGKHITVHTRFPPEPNGYLHIGHAKSICLNFGIAQDYKGQCNLRFDDTNPVKEDIEYVDSIKNDVEWLGFHWSGNVRYSSDYFDQLHAYAIELINKGLAYVDELTPEQIREYRGTLTQPGKNSPYRDRSVEENLALFEKMRAGGFEEGKACLRAKIDMASPFIVMRDPVLYRIKFAEHHQTGNKWCIYPMYDFTHCISDALEGITHSLCTLEFQDNRRLYDWVLDNITIPVHPRQYEFSRLNLEYTVMSKRKLNLLVTDKHVEGWDDPRMPTISGLRRRGYTAASIREFCKRIGVTKQDNTIEMASLESCIREDLNENAPRAMAVIDPVKLVIENYQGEGEMVTMPNHPNKPEMGSRQVPFSGEIWIDRADFREEANKQYKRLVLGKEVRLRNAYVIKAERVEKDAEGNITTIFCTYDADTLSKDPADGRKVKGVIHWVSAAHALPVEIRLYDRLFSVPNPGAADDFLSVINPESLVIKQGFAEPSLKDAVAGKAFQFEREGYFCLDSRHSTAEKPVFNRTVGLRDTWAKVGE.

A 'HIGH' region motif is present at residues 34–44 (PEPNGYLHIGH). ATP-binding positions include 35–37 (EPN) and 41–47 (HIGHAKS). Residues D67 and Y212 each coordinate L-glutamine. ATP contacts are provided by residues T231, 261-262 (RL), and 269-271 (MSK). Residues 268 to 272 (VMSKR) carry the 'KMSKS' region motif. Residues 317 to 324 (TKQDNTIE) are interaction with tRNA.

The protein belongs to the class-I aminoacyl-tRNA synthetase family. In terms of assembly, monomer.

The protein resides in the cytoplasm. The catalysed reaction is tRNA(Gln) + L-glutamine + ATP = L-glutaminyl-tRNA(Gln) + AMP + diphosphate. The polypeptide is Glutamine--tRNA ligase (Shigella flexneri serotype 5b (strain 8401)).